The chain runs to 239 residues: Purine nucleoside phosphorylase DeoD-type (239 aa).

An a purine D-ribonucleoside-binding site is contributed by His5. Residues Gly21, Arg25, Arg44, and 88-91 (RVGS) contribute to the phosphate site. Residues 180–182 (EME) and 204–205 (SD) contribute to the a purine D-ribonucleoside site. Asp205 functions as the Proton donor in the catalytic mechanism.

This sequence belongs to the PNP/UDP phosphorylase family. As to quaternary structure, homohexamer; trimer of homodimers.

The catalysed reaction is a purine D-ribonucleoside + phosphate = a purine nucleobase + alpha-D-ribose 1-phosphate. It catalyses the reaction a purine 2'-deoxy-D-ribonucleoside + phosphate = a purine nucleobase + 2-deoxy-alpha-D-ribose 1-phosphate. Catalyzes the reversible phosphorolytic breakdown of the N-glycosidic bond in the beta-(deoxy)ribonucleoside molecules, with the formation of the corresponding free purine bases and pentose-1-phosphate. This Salmonella choleraesuis (strain SC-B67) protein is Purine nucleoside phosphorylase DeoD-type.